Consider the following 246-residue polypeptide: MTILFLTMVISYFSCMKAAPMKEASVRGHGSLAYPGLRTHGTLESLTGPNAGSRGLTSLADTFEHVIEELLDEDQDIQPSEENKDADLYTSRVMLSSQVPLEPPLLFLLEEYKNYLDAANMSMRVRRHSDPARRGELSVCDSTSEWVTAAEKKTAVDMSGATVTVLEKVPVPKGQLKQYFYETKCNPKGYTKEGCRGIDKRHWNSQCRTTQSYVRALTMDNKKRVGWRFIRIDTSCVCTLTIKRGR.

An N-terminal signal peptide occupies residues 1 to 18 (MTILFLTMVISYFSCMKA). A propeptide spanning residues 19–127 (APMKEASVRG…AANMSMRVRR (109 aa)) is cleaved from the precursor. N-linked (GlcNAc...) asparagine glycosylation occurs at Asn-120. Disulfide bonds link Cys-140–Cys-207, Cys-185–Cys-236, and Cys-195–Cys-238.

Belongs to the NGF-beta family.

It localises to the secreted. In terms of biological role, important signaling molecule that activates signaling cascades downstream of NTRK2. During development, promotes the survival and differentiation of selected neuronal populations of the peripheral and central nervous systems. Participates in axonal growth, pathfinding and in the modulation of dendritic growth and morphology. Major regulator of synaptic transmission and plasticity at adult synapses in many regions of the CNS. The versatility of BDNF is emphasized by its contribution to a range of adaptive neuronal responses including long-term potentiation (LTP), long-term depression (LTD), certain forms of short-term synaptic plasticity, as well as homeostatic regulation of intrinsic neuronal excitability. The polypeptide is Neurotrophic factor BDNF precursor form (BDNF) (Gallus gallus (Chicken)).